The primary structure comprises 171 residues: Protein BTG1 (171 aa).

The residue at position 159 (Ser-159) is a Phosphoserine.

This sequence belongs to the BTG family. As to quaternary structure, interacts with CNOT7 and CNOT8.

Its function is as follows. Anti-proliferative protein. This Homo sapiens (Human) protein is Protein BTG1 (BTG1).